The chain runs to 188 residues: Adrenodoxin, mitochondrial (188 aa).

The N-terminal 64 residues, 1 to 64 (MAAAPGARLL…RPLSVSARAR (64 aa)), are a transit peptide targeting the mitochondrion. The residue at position 67 (S67) is a Phosphoserine. Residues 69-175 (DKITVHFKNR…NMTVRVPEAV (107 aa)) form the 2Fe-2S ferredoxin-type domain. Position 70 is an N6-acetyllysine; alternate (K70). K70 carries the post-translational modification N6-succinyllysine; alternate. 4 residues coordinate [2Fe-2S] cluster: C110, C116, C119, and C156. K162 carries the N6-succinyllysine modification. Position 181 is a phosphoserine (S181).

This sequence belongs to the adrenodoxin/putidaredoxin family. Interacts with CYP11A1. [2Fe-2S] cluster serves as cofactor.

The protein resides in the mitochondrion matrix. Its function is as follows. Essential for the synthesis of various steroid hormones, participates in the reduction of mitochondrial cytochrome P450 for steroidogenesis. Transfers electrons from adrenodoxin reductase to CYP11A1, a cytochrome P450 that catalyzes cholesterol side-chain cleavage. Does not form a ternary complex with adrenodoxin reductase and CYP11A1 but shuttles between the two enzymes to transfer electrons. In Mus musculus (Mouse), this protein is Adrenodoxin, mitochondrial (Fdx1).